The primary structure comprises 94 residues: MLKPLGDRLVLKVEEKEQTVGGFVLAGSAQEKTKTAQVVATGQGVRTLNGDLVAPSVKTGDRVLVEAHAGLDVKDGDEKYIIVGEANILAIIEE.

Belongs to the GroES chaperonin family. In terms of assembly, heptamer of 7 subunits arranged in a ring. Interacts with the chaperonin GroEL.

The protein resides in the cytoplasm. Its function is as follows. Together with the chaperonin GroEL, plays an essential role in assisting protein folding. The GroEL-GroES system forms a nano-cage that allows encapsulation of the non-native substrate proteins and provides a physical environment optimized to promote and accelerate protein folding. GroES binds to the apical surface of the GroEL ring, thereby capping the opening of the GroEL channel. The protein is Co-chaperonin GroES of Streptococcus pneumoniae (strain ATCC 700669 / Spain 23F-1).